The sequence spans 163 residues: Endoribonuclease YbeY (163 aa).

Positions 119, 123, and 129 each coordinate Zn(2+).

It belongs to the endoribonuclease YbeY family. Zn(2+) serves as cofactor.

It localises to the cytoplasm. Its function is as follows. Single strand-specific metallo-endoribonuclease involved in late-stage 70S ribosome quality control and in maturation of the 3' terminus of the 16S rRNA. This Actinobacillus pleuropneumoniae serotype 5b (strain L20) protein is Endoribonuclease YbeY.